The following is a 438-amino-acid chain: sn-glycerol-3-phosphate-binding periplasmic protein UgpB (438 aa).

An N-terminal signal peptide occupies residues 1–23; that stretch reads MKPLHYTASALALGLALMGNAQA. 7 residues coordinate sn-glycerol 3-phosphate: Tyr-65, Glu-89, Ser-144, Ser-270, Gly-307, Tyr-346, and Arg-397.

This sequence belongs to the bacterial solute-binding protein 1 family. As to quaternary structure, the complex is composed of two ATP-binding proteins (UgpC), two transmembrane proteins (UgpA and UgpE) and a solute-binding protein (UgpB).

It localises to the periplasm. Part of the ABC transporter complex UgpBAEC involved in sn-glycerol-3-phosphate (G3P) import. Binds G3P. The polypeptide is sn-glycerol-3-phosphate-binding periplasmic protein UgpB (ugpB) (Shigella flexneri).